Here is a 428-residue protein sequence, read N- to C-terminus: MYKEPFQPTYEYALECDKHDELKDFQTEFYKKEGTIYLDGNSLGLLSKRAEKSLLTLLDSWKEYGIDGWTEGEHPWFFLSEKLGELTAPLIGALPEESIVTGSTTTNIHQVIATFYEPKGIRTKILADELTFPSDIYALQSQIRLKGLDPDEHLVRVKSRDGRTLSEDDIIQAMTDDIALILLPSVLYRSGQILDMKRLTAEAHERGIHIGFDLCHSIGSIPHHFKEWDVDFAIWCNYKYLNAGPGGVAGLYVNKKHFNRLPGLSGWFSSRKDKQFDMEHTLTAADHAGAYQIGTPHILSTAPLIGSLEIFKDAGIERLREKSLHITRYMLNLIDHELKDFGFAIGNPLEDEKRGGHIYLEHAEAARICKALKANGVIPDFRAPNGVRLAPVALYNTYEEVWQSVMILKKIMKDEEYKQFENKREVVA.

Pyridoxal 5'-phosphate is bound by residues Thr-104, Thr-105, 132-135, Asp-213, His-216, and Tyr-238; that span reads FPSD. The residue at position 239 (Lys-239) is an N6-(pyridoxal phosphate)lysine. The pyridoxal 5'-phosphate site is built by Trp-267 and Thr-295.

This sequence belongs to the kynureninase family. In terms of assembly, homodimer. It depends on pyridoxal 5'-phosphate as a cofactor.

The enzyme catalyses L-kynurenine + H2O = anthranilate + L-alanine + H(+). It catalyses the reaction 3-hydroxy-L-kynurenine + H2O = 3-hydroxyanthranilate + L-alanine + H(+). The protein operates within amino-acid degradation; L-kynurenine degradation; L-alanine and anthranilate from L-kynurenine: step 1/1. Its pathway is cofactor biosynthesis; NAD(+) biosynthesis; quinolinate from L-kynurenine: step 2/3. Its function is as follows. Catalyzes the cleavage of L-kynurenine (L-Kyn) and L-3-hydroxykynurenine (L-3OHKyn) into anthranilic acid (AA) and 3-hydroxyanthranilic acid (3-OHAA), respectively. This is Kynureninase from Bacillus thuringiensis subsp. konkukian (strain 97-27).